A 388-amino-acid chain; its full sequence is S-adenosylmethionine synthase (388 aa).

Residue histidine 16 participates in ATP binding. Mg(2+) is bound at residue aspartate 18. Glutamate 44 lines the K(+) pocket. L-methionine-binding residues include glutamate 57 and glutamine 100. The flexible loop stretch occupies residues 100-110 (QSPDIAQGVNE). ATP contacts are provided by residues 167–169 (DGK), 233–234 (RF), aspartate 242, 248–249 (RK), and lysine 269. Aspartate 242 contributes to the L-methionine binding site. Residue lysine 273 participates in L-methionine binding.

It belongs to the AdoMet synthase family. Homotetramer; dimer of dimers. Mg(2+) is required as a cofactor. It depends on K(+) as a cofactor.

Its subcellular location is the cytoplasm. It catalyses the reaction L-methionine + ATP + H2O = S-adenosyl-L-methionine + phosphate + diphosphate. It participates in amino-acid biosynthesis; S-adenosyl-L-methionine biosynthesis; S-adenosyl-L-methionine from L-methionine: step 1/1. Catalyzes the formation of S-adenosylmethionine (AdoMet) from methionine and ATP. The overall synthetic reaction is composed of two sequential steps, AdoMet formation and the subsequent tripolyphosphate hydrolysis which occurs prior to release of AdoMet from the enzyme. This chain is S-adenosylmethionine synthase, found in Desulfosudis oleivorans (strain DSM 6200 / JCM 39069 / Hxd3) (Desulfococcus oleovorans).